The chain runs to 342 residues: Isopentenyl-diphosphate delta-isomerase (342 aa).

11–12 (RK) lines the substrate pocket. Residues serine 68, 69 to 71 (SMT), serine 99, and asparagine 127 contribute to the FMN site. 99-101 (SMR) lines the substrate pocket. Glutamine 162 provides a ligand contact to substrate. Glutamate 163 is a binding site for Mg(2+). FMN is bound by residues lysine 194, threonine 224, 274–276 (GFK), and 295–296 (AG).

Belongs to the IPP isomerase type 2 family. In terms of assembly, homooctamer. Dimer of tetramers. FMN is required as a cofactor. The cofactor is NADPH. Requires Mg(2+) as cofactor.

It localises to the cytoplasm. It carries out the reaction isopentenyl diphosphate = dimethylallyl diphosphate. In terms of biological role, involved in the biosynthesis of isoprenoids. Catalyzes the 1,3-allylic rearrangement of the homoallylic substrate isopentenyl (IPP) to its allylic isomer, dimethylallyl diphosphate (DMAPP). The protein is Isopentenyl-diphosphate delta-isomerase of Rickettsia conorii (strain ATCC VR-613 / Malish 7).